The primary structure comprises 87 residues: Potassium channel toxin Ttr-beta-KTx (87 aa).

The N-terminal stretch at 1-19 is a signal peptide; sequence MERKWALLLFLGMVTLVSC. The propeptide occupies 20-27; that stretch reads GLREKHVQ. The 35-residue stretch at 53 to 87 folds into the BetaSPN-type CS-alpha/beta domain; the sequence is QFGCPAYEGYCNNHCQDIKRKDGECHGFKCKCAKD. Cystine bridges form between Cys-56–Cys-77, Cys-63–Cys-82, and Cys-67–Cys-84.

It belongs to the long chain scorpion toxin family. Class 1 subfamily. As to expression, expressed by the venom gland.

The protein resides in the secreted. Inhibits voltage-gated potassium channel. This chain is Potassium channel toxin Ttr-beta-KTx, found in Tityus trivittatus (Argentinean scorpion).